A 172-amino-acid polypeptide reads, in one-letter code: MFDAFTKVVSQADTRGEMLSTAQIDALSQMVAESNKRLDAVNRITSNASTIVSNAARSLFAEQPQLIAPGGNAYTSRRMAACLRDMEIILRYVTYAVFAGDASVLEDRCLNGLRETYLALGTPGSSVAVGVGKMKEAALAIVNDPAGITPGDCSALASEIASYFDRACAAVS.

Position 72 is an N4-methylasparagine (Asn-72). (2R,3E)-phycocyanobilin is bound by residues Cys-82 and Cys-153.

This sequence belongs to the phycobiliprotein family. In terms of assembly, the alpha and beta subunits exhibit high affinity for one another and form heterodimers. These heterodimers form heterohexamers of 3 alpha and 3 beta subunits which, in turn, aggregate into a heterododecamer consisting of 2 heterohexamers. Post-translationally, contains two covalently linked bilin chromophores.

The protein resides in the cellular thylakoid membrane. Light-harvesting photosynthetic bile pigment-protein from the phycobiliprotein complex (phycobilisome, PBS). Phycocyanin is the major phycobiliprotein in the PBS rod. This chain is C-phycocyanin beta subunit (cpcB), found in Arthrospira platensis (Spirulina platensis).